The following is a 166-amino-acid chain: 2-C-methyl-D-erythritol 2,4-cyclodiphosphate synthase (166 aa).

2 residues coordinate a divalent metal cation: Asp12 and His14. 4-CDP-2-C-methyl-D-erythritol 2-phosphate is bound by residues 12-14 and 38-39; these read DSH and HS. His46 serves as a coordination point for a divalent metal cation. 4-CDP-2-C-methyl-D-erythritol 2-phosphate contacts are provided by residues 60–62, 65–69, and Arg146; these read DIG and FPDTD.

It belongs to the IspF family. Homotrimer. The cofactor is a divalent metal cation.

The catalysed reaction is 4-CDP-2-C-methyl-D-erythritol 2-phosphate = 2-C-methyl-D-erythritol 2,4-cyclic diphosphate + CMP. It participates in isoprenoid biosynthesis; isopentenyl diphosphate biosynthesis via DXP pathway; isopentenyl diphosphate from 1-deoxy-D-xylulose 5-phosphate: step 4/6. Involved in the biosynthesis of isopentenyl diphosphate (IPP) and dimethylallyl diphosphate (DMAPP), two major building blocks of isoprenoid compounds. Catalyzes the conversion of 4-diphosphocytidyl-2-C-methyl-D-erythritol 2-phosphate (CDP-ME2P) to 2-C-methyl-D-erythritol 2,4-cyclodiphosphate (ME-CPP) with a corresponding release of cytidine 5-monophosphate (CMP). The protein is 2-C-methyl-D-erythritol 2,4-cyclodiphosphate synthase of Gemmatimonas aurantiaca (strain DSM 14586 / JCM 11422 / NBRC 100505 / T-27).